Here is a 150-residue protein sequence, read N- to C-terminus: Urease accessory protein UreE (150 aa).

The protein belongs to the UreE family.

The protein localises to the cytoplasm. Its function is as follows. Involved in urease metallocenter assembly. Binds nickel. Probably functions as a nickel donor during metallocenter assembly. This is Urease accessory protein UreE from Parasynechococcus marenigrum (strain WH8102).